We begin with the raw amino-acid sequence, 517 residues long: Pseudaminic acid cytidylyltransferase and UDP-2,4-diacetamido-2,4,6-trideoxy-beta-L-altropyranose hydrolase (517 aa).

The pseudaminic acid cytidylyltransferase stretch occupies residues 1–208 (MRAIAIVLAR…ELSPLEVQDI (208 aa)). The tract at residues 209–517 (AHFRRFRISQ…EGALREFLEI (309 aa)) is UDP-2,4-diacetamido-2,4,6-trideoxy-beta-L-altropyranose hydrolase. His-244 serves as the catalytic Proton acceptor; for UDP-2,4-diacetamido-2,4,6-trideoxy-beta-L-altropyranose hydrolase activity.

In the N-terminal section; belongs to the CMP-NeuNAc synthase family. It in the C-terminal section; belongs to the PseG family. In terms of assembly, monomer. The cofactor is Mg(2+).

It carries out the reaction UDP-2,4-diacetamido-2,4,6-trideoxy-beta-L-altrose + H2O = 2,4-diacetamido-2,4,6-trideoxy-beta-L-altrose + UDP + H(+). The enzyme catalyses pseudaminate + CTP = CMP-pseudaminate + diphosphate. In terms of biological role, catalyzes the fourth and sixth steps in the biosynthesis of pseudaminic acid, a sialic-acid-like sugar that is used to modify flagellin. The C-terminus mediates the fourth step of the pathway and catalyzes the removal of UDP from C-1 of UDP-2,4-diacetamido-2,4,6-trideoxy-beta-L-altropyranose forming 2,4-diacetamido-2,4,6-trideoxy-beta-L-altropyranose. The N-terminal part mediates the last step of the pathway by mediating activation of pseudaminic acid with CMP by forming CMP-pseudaminic acid. This is Pseudaminic acid cytidylyltransferase and UDP-2,4-diacetamido-2,4,6-trideoxy-beta-L-altropyranose hydrolase from Helicobacter pylori (strain ATCC 700392 / 26695) (Campylobacter pylori).